Here is a 250-residue protein sequence, read N- to C-terminus: 5-oxoprolinase subunit A (250 aa).

The protein belongs to the LamB/PxpA family. In terms of assembly, forms a complex composed of PxpA, PxpB and PxpC.

It catalyses the reaction 5-oxo-L-proline + ATP + 2 H2O = L-glutamate + ADP + phosphate + H(+). Its function is as follows. Catalyzes the cleavage of 5-oxoproline to form L-glutamate coupled to the hydrolysis of ATP to ADP and inorganic phosphate. In Pseudomonas fluorescens (strain ATCC BAA-477 / NRRL B-23932 / Pf-5), this protein is 5-oxoprolinase subunit A.